The chain runs to 336 residues: MNTEATHDQNEALTTGARLRNAREQLGLSQQAVAERLCLKVSTVRDIEEDKAPADLASTFLRGYIRSYARLVHIPEEELLPGLEKQAPLRAAKVAPMQSFSLGKRRKKRDGWLMTFTWLVLFVVIGLSGAWWWQDHKAQQEEITTMADQSSAELNNNQSQSVPLDTSTTTDQAMATTPTSPVDTTATNTQTPAATTAPSPTVDSQQNAVVPPSQANVDTAATPAPAATTMPDGAAPLPTDQAGVTTPAADPNALVMNFTADCWLEVTDATGKKLFSGMQRKDGNLNLTGQAPYKLKIGAPAAVQIQYQGKPVDLSRFIRTNQVARLTLNAEQSPAQ.

Residues 1–111 (MNTEATHDQN…LGKRRKKRDG (111 aa)) are Cytoplasmic-facing. Positions 19–71 (LRNAREQLGLSQQAVAERLCLKVSTVRDIEEDKAPADLASTFLRGYIRSYARL) constitute an HTH cro/C1-type domain. Positions 30-49 (QQAVAERLCLKVSTVRDIEE) form a DNA-binding region, H-T-H motif. The chain crosses the membrane as a helical; Signal-anchor for type II membrane protein span at residues 112–132 (WLMTFTWLVLFVVIGLSGAWW). Residues 133 to 336 (WQDHKAQQEE…TLNAEQSPAQ (204 aa)) lie on the Periplasmic side of the membrane. Residues 148–164 (DQSSAELNNNQSQSVPL) are compositionally biased toward polar residues. Residues 148–248 (DQSSAELNNN…TDQAGVTTPA (101 aa)) form a disordered region. Positions 165 to 201 (DTSTTTDQAMATTPTSPVDTTATNTQTPAATTAPSPT) are enriched in low complexity. Residues 202–217 (VDSQQNAVVPPSQANV) are compositionally biased toward polar residues. Low complexity predominate over residues 219–236 (TAATPAPAATTMPDGAAP).

Belongs to the RodZ family.

The protein localises to the cell inner membrane. Cytoskeletal protein that is involved in cell-shape control through regulation of the length of the long axis. This chain is Cytoskeleton protein RodZ, found in Escherichia coli (strain SMS-3-5 / SECEC).